Consider the following 772-residue polypeptide: Acyl-homoserine lactone acylase PvdQ (772 aa).

Residues 1–28 (MPVFPFCRPMTCAGLAAALVAFSVGVQA) form the signal peptide. Positions 199–220 (AQSSAGFASALARQERFAAERG) are cleaved as a propeptide — spacer peptide. Ser221 acts as the Nucleophile in catalysis.

This sequence belongs to the peptidase S45 family. In terms of assembly, heterodimer of an alpha subunit and a beta subunit processed from the same precursor.

It localises to the periplasm. The enzyme catalyses an N-acyl-L-homoserine lactone + H2O = L-homoserine lactone + a carboxylate. Catalyzes the deacylation of acyl-homoserine lactone (AHL or acyl-HSL), releasing homoserine lactone (HSL) and the corresponding fatty acid. Possesses a specificity for the degradation of long-chain acyl-HSLs (side chains of 11 to 14 carbons in length). The protein is Acyl-homoserine lactone acylase PvdQ (pvdQ) of Pseudomonas putida (strain ATCC 47054 / DSM 6125 / CFBP 8728 / NCIMB 11950 / KT2440).